A 79-amino-acid chain; its full sequence is MGMSKSIKVIVSLALILFLALAATKVEATRYISYRGMNHGDHAIHCDKAHPNTCKKQVANPYRRGCGTIERCRRDTGRK.

A signal peptide spans 1 to 28; that stretch reads MGMSKSIKVIVSLALILFLALAATKVEA. Cystine bridges form between Cys46–Cys54 and Cys66–Cys72.

The protein belongs to the plant rapid alkalinization factor (RALF) family.

The protein resides in the secreted. Its function is as follows. Cell signaling peptide that may regulate plant stress, growth, and development. Mediates a rapid alkalinization of extracellular space by mediating a transient increase in the cytoplasmic Ca(2+) concentration leading to a calcium-dependent signaling events through a cell surface receptor and a concomitant activation of some intracellular mitogen-activated protein kinases. This is Protein RALF-like 15 (RALFL15) from Arabidopsis thaliana (Mouse-ear cress).